Reading from the N-terminus, the 471-residue chain is Glutamate--tRNA ligase (471 aa).

Positions 9 to 19 (PSPTGYLHVGG) match the 'HIGH' region motif. Positions 98, 100, 125, and 127 each coordinate Zn(2+). The short motif at 237 to 241 (KLSKR) is the 'KMSKS' region element. Residue K240 participates in ATP binding.

It belongs to the class-I aminoacyl-tRNA synthetase family. Glutamate--tRNA ligase type 1 subfamily. As to quaternary structure, monomer. Zn(2+) is required as a cofactor.

It is found in the cytoplasm. The enzyme catalyses tRNA(Glu) + L-glutamate + ATP = L-glutamyl-tRNA(Glu) + AMP + diphosphate. Functionally, catalyzes the attachment of glutamate to tRNA(Glu) in a two-step reaction: glutamate is first activated by ATP to form Glu-AMP and then transferred to the acceptor end of tRNA(Glu). The protein is Glutamate--tRNA ligase of Yersinia pseudotuberculosis serotype O:1b (strain IP 31758).